Here is a 135-residue protein sequence, read N- to C-terminus: Small ribosomal subunit protein uS9 (135 aa).

A compositionally biased stretch (basic and acidic residues) spans 108-118 (VGDPRRTEPHK). The disordered stretch occupies residues 108–135 (VGDPRRTEPHKPNRSTKGPRAKRQKSYR). Over residues 119 to 135 (PNRSTKGPRAKRQKSYR) the composition is skewed to basic residues.

The protein belongs to the universal ribosomal protein uS9 family.

The polypeptide is Small ribosomal subunit protein uS9 (rps9) (Pyrococcus horikoshii (strain ATCC 700860 / DSM 12428 / JCM 9974 / NBRC 100139 / OT-3)).